We begin with the raw amino-acid sequence, 235 residues long: MSQPPLDELQWKSPEWIQSFGLRTDNVLDYFSQSPFFDKTSNNHVVKMQQQFSQQMPPAPQTARPKAAPSAERQAIWDRYPAYALLEQELAKLKGIEYVLAHVREPDFWVVRKQRRAGDRVTALNDYYIIGANVYQAPTAYSVVQNRLLSTGFHLSAALGAIQRLARFQPGQGAAFVPVEQNSVQPASGTTASSATAPALTAALDGATAGYSDVLTPEMMDRLMLQSLKSTPLYL.

The protein belongs to the Mediator complex subunit 6 family. As to quaternary structure, component of the Mediator complex.

It is found in the nucleus. Functionally, component of the Mediator complex, a coactivator involved in the regulated transcription of nearly all RNA polymerase II-dependent genes. Mediator functions as a bridge to convey information from gene-specific regulatory proteins to the basal RNA polymerase II transcription machinery. Mediator is recruited to promoters by direct interactions with regulatory proteins and serves as a scaffold for the assembly of a functional preinitiation complex with RNA polymerase II and the general transcription factors. In Eremothecium gossypii (strain ATCC 10895 / CBS 109.51 / FGSC 9923 / NRRL Y-1056) (Yeast), this protein is Mediator of RNA polymerase II transcription subunit 6 (MED6).